An 87-amino-acid polypeptide reads, in one-letter code: Small ribosomal subunit protein uS15c (87 aa).

It belongs to the universal ribosomal protein uS15 family. In terms of assembly, part of the 30S ribosomal subunit.

It is found in the plastid. The protein resides in the chloroplast. The protein is Small ribosomal subunit protein uS15c (rps15) of Nymphaea alba (White water-lily).